A 593-amino-acid chain; its full sequence is Thiol:disulfide interchange protein DsbD (593 aa).

A signal peptide spans 1 to 21 (MRALLTFFVAGLLVLSSPAMA). 2 disulfides stabilise this stretch: Cys-130–Cys-136 and Cys-207–Cys-328. Transmembrane regions (helical) follow at residues 193–215 (LLFLALGVGLAFTPCVLPMYPIL), 235–257 (LVYVQGMALTYTLLGLVVASAGL), 269–291 (LIGLSILFVTLALSMFGVYTLQL), 318–340 (GAISGLVCSPCTTAPLSGALLYV), 347–369 (LTGGVALYALAMGMGIPLILVAV), 384–401 (RVKTLFGFVLLAAPIFLL), 408–425 (MWSTALWSALGIAAFGWL), and 440–462 (SAVGIIAVLGLFASAQPALNYWF). Residues 451-593 (FASAQPALNY…FLEHIQRISN (143 aa)) form the Thioredoxin domain. Cys-508 and Cys-511 form a disulfide bridge.

It belongs to the thioredoxin family. DsbD subfamily.

Its subcellular location is the cell inner membrane. It catalyses the reaction [protein]-dithiol + NAD(+) = [protein]-disulfide + NADH + H(+). It carries out the reaction [protein]-dithiol + NADP(+) = [protein]-disulfide + NADPH + H(+). Its function is as follows. Required to facilitate the formation of correct disulfide bonds in some periplasmic proteins and for the assembly of the periplasmic c-type cytochromes. Acts by transferring electrons from cytoplasmic thioredoxin to the periplasm. This transfer involves a cascade of disulfide bond formation and reduction steps. This Vibrio vulnificus (strain CMCP6) protein is Thiol:disulfide interchange protein DsbD.